A 78-amino-acid chain; its full sequence is Small nuclear ribonucleoprotein F (78 aa).

In terms of domain architecture, Sm spans 7–78 (NPKPFLQGLI…NVLWVGESTV (72 aa)).

It belongs to the snRNP Sm proteins family. SmF/LSm6 subfamily. As to quaternary structure, belongs to the 40S cdc5-associated complex (or cwf complex), a spliceosome sub-complex reminiscent of a late-stage spliceosome composed of the U2, U5 and U6 snRNAs and at least brr2, cdc5, cwf2/prp3, cwf3/syf1, cwf4/syf3, cwf5/ecm2, spp42/cwf6, cwf7/spf27, cwf8, cwf9, cwf10, cwf11, cwf12, prp45/cwf13, cwf14, cwf15, cwf16, cwf17, cwf18, cwf19, cwf20, cwf21, cwf22, cwf23, cwf24, cwf25, cwf26, cyp7/cwf27, cwf28, cwf29/ist3, lea1, msl1, prp5/cwf1, prp10, prp12/sap130, prp17, prp22, sap61, sap62, sap114, sap145, slu7, smb1, smd1, smd3, smf1, smg1 and syf2.

The protein resides in the nucleus. Its subcellular location is the cytoplasm. In terms of biological role, plays a role in pre-mRNA splicing as a core component of the spliceosomal U1, U2, U4 and U5 small nuclear ribonucleoproteins (snRNPs), the building blocks of the spliceosome. This is Small nuclear ribonucleoprotein F (smf1) from Schizosaccharomyces pombe (strain 972 / ATCC 24843) (Fission yeast).